Reading from the N-terminus, the 895-residue chain is Zinc finger protein 281 (895 aa).

Disordered regions lie at residues 1–44 and 63–113; these read MKIG…EMEP and FTRP…AFPS. Lysine 2 is covalently cross-linked (Glycyl lysine isopeptide (Lys-Gly) (interchain with G-Cter in SUMO2)). Gly residues predominate over residues 7–36; it reads FLSGGGGTGSSGGSGSGGGGSGGGGGGGSS. Residues arginine 65, lysine 101, and lysine 128 each participate in a glycyl lysine isopeptide (Lys-Gly) (interchain with G-Cter in SUMO2) cross-link. Basic and acidic residues-rich tracts occupy residues 130–140 and 202–218; these read EKPADPEEQQS and RTDDHHGTEEPKQDTNV. Disordered regions lie at residues 130–149 and 183–253; these read EKPADPEEQQSHHHHHHHHY and HVQQ…EGAI. Glycyl lysine isopeptide (Lys-Gly) (interchain with G-Cter in SUMO2) cross-links involve residues lysine 213, lysine 219, lysine 225, lysine 232, lysine 242, and lysine 259. 3 consecutive C2H2-type zinc fingers follow at residues 261–283, 289–311, and 317–339; these read HICDHCSAAFRSSYHLRRHVLIH, FQCSQCSMGFIQKYLLQRHEKIH, and FGCDQCSMKFIQKYHMERHKRTH. Residues lysine 301 and lysine 325 each participate in a glycyl lysine isopeptide (Lys-Gly) (interchain with G-Cter in SUMO2) cross-link. Residues 345 to 367 form a C2H2-type 4; atypical zinc finger; the sequence is YKCDTCQQYFSRTDRLLKHRRTC. Lysine 373 is covalently cross-linked (Glycyl lysine isopeptide (Lys-Gly) (interchain with G-Cter in SUMO2)). Positions 377–427 are disordered; sequence SAEPGSSNHTNMGNLAVLSQGNTSSSRRKTKSKSIAIENKEQKTGKTNESQ. The span at 379 to 398 shows a compositional bias: polar residues; it reads EPGSSNHTNMGNLAVLSQGN. Serine 395 bears the Phosphoserine mark. Residues lysine 409, lysine 416, lysine 460, and lysine 477 each participate in a glycyl lysine isopeptide (Lys-Gly) (interchain with G-Cter in SUMO2) cross-link. Serine 484 carries the post-translational modification Phosphoserine. Glycyl lysine isopeptide (Lys-Gly) (interchain with G-Cter in SUMO2) cross-links involve residues lysine 493, lysine 498, lysine 539, lysine 599, lysine 617, and lysine 622. The disordered stretch occupies residues 638 to 660; the sequence is SGEHSELVQEENLSPGTQTPSND. Polar residues predominate over residues 648–660; it reads ENLSPGTQTPSND. A Phosphoserine modification is found at serine 651. Residues lysine 661 and lysine 670 each participate in a glycyl lysine isopeptide (Lys-Gly) (interchain with G-Cter in SUMO2) cross-link. A compositionally biased stretch (polar residues) spans 778-789; that stretch reads SSAFQSSSQKLT. The segment at 778–817 is disordered; it reads SSAFQSSSQKLTSQKEQKNLESSTGFQIPSQELASQIDPQ. Serine 785 is modified (phosphoserine). Residues lysine 787, lysine 792, and lysine 795 each participate in a glycyl lysine isopeptide (Lys-Gly) (interchain with G-Cter in SUMO2) cross-link. Polar residues predominate over residues 797–815; it reads LESSTGFQIPSQELASQID. Serine 807 carries the phosphoserine modification. Residues lysine 818 and lysine 840 each participate in a glycyl lysine isopeptide (Lys-Gly) (interchain with G-Cter in SUMO2) cross-link. Threonine 888 carries the post-translational modification Phosphothreonine.

Belongs to the krueppel C2H2-type zinc-finger protein family.

The protein localises to the nucleus. Functionally, transcription repressor that plays a role in regulation of embryonic stem cells (ESCs) differentiation. Required for ESCs differentiation and acts by mediating autorepression of NANOG in ESCs: binds to the NANOG promoter and promotes association of NANOG protein to its own promoter and recruits the NuRD complex, which deacetylates histones. Not required for establishement and maintenance of ESCs. Represses the transcription of a number of genes including GAST, ODC1 and VIM. Binds to the G-rich box in the enhancer region of these genes. In Homo sapiens (Human), this protein is Zinc finger protein 281 (ZNF281).